The sequence spans 460 residues: MSQYETPLFTALVEHSKRNPIQFHIPGHKKGQGMDPTFREFIGHNALAIDLINIAPLDDLHHPKGMIKEAQDLAAAAFGADHTFFSIQGTSGAIMTMVMSVCGPGDKILVPRNVHKSVMSAIIFSGAKPIFMHPEIDPKLGISHGITIQSVKKALEEHSDAKGLLVINPTYFGFAADLEQIVQLAHSYDIPVLVDEAHGVHIHFHDELPMSAMQAGADMAATSVHKLGGSLTQSSILNVKEGLVNVKHVQSIISMLTTTSTSYILLASLDVARKRLATEGTALIEQTIQLAEHVRDAINSIEHLYCPGKEMLGTDATFNYDPTKIIVSVKDLGITGHQAEVWLREQYNIEVELSDLYNILCLITLGDTESDTNTLIAALQDLAATFRNRADKGVQVQVEIPEIPVLALSPRDAFYSETEVIPFENAAGRIIADFVMVYPPGIPIFTPGGNYYTRKLRVYS.

Lys226 carries the N6-(pyridoxal phosphate)lysine modification.

This sequence belongs to the Orn/Lys/Arg decarboxylase class-I family. Pyridoxal 5'-phosphate is required as a cofactor.

It is found in the cytoplasm. It catalyses the reaction L-arginine + H(+) = agmatine + CO2. Its pathway is amine and polyamine biosynthesis; agmatine biosynthesis; agmatine from L-arginine: step 1/1. Its function is as follows. Catalyzes the formation of agmatine from arginine. The chain is Arginine decarboxylase (speA) from Bacillus cereus (strain ATCC 14579 / DSM 31 / CCUG 7414 / JCM 2152 / NBRC 15305 / NCIMB 9373 / NCTC 2599 / NRRL B-3711).